We begin with the raw amino-acid sequence, 492 residues long: Differentially expressed in FDCP 8 homolog (492 aa).

Over residues 38–51 the composition is skewed to gly residues; the sequence is GLGGSGSTGSGSEA. The tract at residues 38–62 is disordered; that stretch reads GLGGSGSTGSGSEAGGSEESGPQGA. Phorbol-ester/DAG-type zinc fingers lie at residues 161–214 and 400–453; these read PHHG…KRVC and DHIR…NMIC. A disordered region spans residues 468–492; that stretch reads RMKSTEDDDDDDDGVATDDDVTAAE. Positions 473–492 are enriched in acidic residues; sequence EDDDDDDDGVATDDDVTAAE.

It belongs to the DEF8 family.

The sequence is that of Differentially expressed in FDCP 8 homolog from Drosophila melanogaster (Fruit fly).